Reading from the N-terminus, the 234-residue chain is Proteasome subunit beta (234 aa).

Residues 1–35 (MNPDLNMNPHDSGRTDPYAPELGEIATDEGDGENV) form a disordered region. Positions 1-39 (MNPDLNMNPHDSGRTDPYAPELGEIATDEGDGENVTKTG) are cleaved as a propeptide — removed in mature form; by autocatalysis. The active-site Nucleophile is the Thr-40.

This sequence belongs to the peptidase T1B family. The 20S proteasome core is composed of 14 alpha and 14 beta subunits that assemble into four stacked heptameric rings, resulting in a barrel-shaped structure. The two inner rings, each composed of seven catalytic beta subunits, are sandwiched by two outer rings, each composed of seven alpha subunits. The catalytic chamber with the active sites is on the inside of the barrel. Has a gated structure, the ends of the cylinder being occluded by the N-termini of the alpha-subunits. Is capped at one or both ends by the proteasome regulatory ATPase, PAN.

The protein resides in the cytoplasm. The enzyme catalyses Cleavage of peptide bonds with very broad specificity.. With respect to regulation, the formation of the proteasomal ATPase PAN-20S proteasome complex, via the docking of the C-termini of PAN into the intersubunit pockets in the alpha-rings, triggers opening of the gate for substrate entry. Interconversion between the open-gate and close-gate conformations leads to a dynamic regulation of the 20S proteasome proteolysis activity. Functionally, component of the proteasome core, a large protease complex with broad specificity involved in protein degradation. This Halorhabdus utahensis (strain DSM 12940 / JCM 11049 / AX-2) protein is Proteasome subunit beta.